We begin with the raw amino-acid sequence, 180 residues long: Stathmin-3 (180 aa).

S-palmitoyl cysteine attachment occurs at residues cysteine 22 and cysteine 24. The SLD domain occupies 38 to 180 (GDMEVKQLDK…NKEQREEMSG (143 aa)). Residues serine 50, serine 60, serine 65, serine 68, serine 72, serine 73, and serine 81 each carry the phosphoserine modification. The disordered stretch occupies residues 59–82 (KSPSDLSPESPMLSSPPKKKDTSL). A compositionally biased stretch (low complexity) spans 60–74 (SPSDLSPESPMLSSP). Positions 75–179 (PKKKDTSLEE…RNKEQREEMS (105 aa)) form a coiled coil.

This sequence belongs to the stathmin family. Interacts with STAT3. Interacts with CLU (secreted form); this interaction may act as an important modulator during neuronal differentiation. N-terminal palmitoylation promotes specific anchoring to the cytosolic leaflet of Golgi membranes and subsequent vesicular trafficking along dendrites and axons. Neuronal Stathmins are substrates for palmitoyltransferases ZDHHC3, ZDHHC7 and ZDHHC15. In terms of tissue distribution, neuron specific.

The protein localises to the golgi apparatus. It is found in the cell projection. The protein resides in the growth cone. It localises to the axon. Its subcellular location is the cytoplasm. The protein localises to the cytosol. Functionally, exhibits microtubule-destabilizing activity, which is antagonized by STAT3. This Homo sapiens (Human) protein is Stathmin-3 (STMN3).